A 1291-amino-acid chain; its full sequence is METEFVNANHLPHFLRRALPALGPGLLIAIGYVDPGKWAATVEGGARFGFDLVLPMLIFNFVAILCQYLSARIGVVTGKDLAQICSDEYDKWTCMFLGVQAALSVIALDLTMILGIAHGLNLLFGMDLSTCVFLAAVDAVLFPVFATLLERCKASFLSTCIAGFLLLLYFFGVLISQPEIPLPMNGMPIKLSEDSAFALMSLLGASIMPHNFFLHSSMVLQHQGPPNISKGALCLNHFFAILCIFSGIYLVNYVLMNSAANVFYSTGLVLLTFPDAMSLMEPVFRSPVALCVFSLILFFANHITALTWNLGGQVVLQGFLRLDIPNWLQRATIRIIAVVPALYCVWTSGVEGIYQLLIFTQVMVALLLPSSVIPLFRIASSRQVMAAYKISAFLEFLALISFMGMLGIKIIFVVEMVFGDSDWAGNLRWSTSGGSSTSYTVLLITACSSFCLMLWLAATPLKSATHLDAQVWNWDVQNTVSEPSMQIEEEIFSETRYTEEESIGGQEQLSGPGKSAESYSDVTVANADPDLPVTIMESDQEHHLTTIKENHSEITFSSPGTFYEEETSPIIESVSLSAAMNVVPGSELLGAKKIDIESMDSVEKTVDIDGDFHAEKEDDEGDSWEPEESSKGVPGSTSSLTSDGPGSFRSLSGKSDEGGNGAGSLSRLAGLGRAARRQLASVLDEFWGQLYDFHGQTTQEAKTKKLDALGVDLKPSLLKVDTAGKEFSGYFSSVGGRASDSQIHSSLGDSPNHLRVPSNIDSSYGGQRGPSSLWSNHMQLMDAYAQGPSRSIADSSERRYSSVHTLPSSDGRCIQPATVHGYQIASIINQIAKERGSSSLNGQMDSPAPISPSLGPRNYRDPLTVAMGQKLQNGPSSSQPPGFQNLAVSRNSTLQSERHYHDVYSSGSADDAGKSANTKKYHSLPDIAGLAGPYRDLYMSEKNAQWDKSVGFGSSVSRTGYEQSYYSNTRSGAGAGGPLSFNRLPKGHGDAFSFHMTPDPGSLWSRQPFEQFGVADKSRVVGSGLGNRSNSINREVISPVDPEAQLLQSFRRCIVKLLKLEGSDWLFRQNDGADEDLIDRVAARERYLYEAETREMNCVANMGESPYLYSDRKSGSVLRNDDAAITNIMVSSVPNCGEGCVWRVDLIISFGVWCIHRILDLSLMESRPELWGKYTYVLNRLQGIIELAFSKPRSPMSPCFCLQIPASHQHRSSPPVSNGMLPPASKPGRGKCTTAATLLDLIKDVEIAISCRKGRSGTAAGDVAFPKGKENLASVLKRYKRRLSSKGIASK.

Helical transmembrane passes span 18-38, 48-68, 96-116, 128-148, 155-175, and 195-215; these read ALPALGPGLLIAIGYVDPGKW, FGFDLVLPMLIFNFVAILCQY, FLGVQAALSVIALDLTMILGI, LSTCVFLAAVDAVLFPVFATL, SFLSTCIAGFLLLLYFFGVLI, and SAFALMSLLGASIMPHNFFLH. An N-linked (GlcNAc...) asparagine glycan is attached at Asn227. A run of 7 helical transmembrane segments spans residues 231-251, 253-273, 288-308, 335-355, 356-376, 393-413, and 441-461; these read GALCLNHFFAILCIFSGIYLV, YVLMNSAANVFYSTGLVLLTF, VALCVFSLILFFANHITALTW, IIAVVPALYCVWTSGVEGIYQ, LLIFTQVMVALLLPSSVIPLF, FLEFLALISFMGMLGIKIIFV, and VLLITACSSFCLMLWLAATPL. The segment at 498-518 is disordered; it reads TEEESIGGQEQLSGPGKSAES. Asn550 carries N-linked (GlcNAc...) asparagine glycosylation. The tract at residues 614–662 is disordered; that stretch reads AEKEDDEGDSWEPEESSKGVPGSTSSLTSDGPGSFRSLSGKSDEGGNGA. Residues 617 to 627 are compositionally biased toward acidic residues; the sequence is EDDEGDSWEPE. The segment covering 635–653 has biased composition (polar residues); it reads GSTSSLTSDGPGSFRSLSG. Phosphoserine is present on residues Ser647 and Ser664. 2 disordered regions span residues 742-768 and 787-808; these read QIHSSLGDSPNHLRVPSNIDSSYGGQR and GPSRSIADSSERRYSSVHTLPS. The span at 759–768 shows a compositional bias: polar residues; the sequence is NIDSSYGGQR. Thr818 is modified (phosphothreonine). Positions 836 to 856 are disordered; that stretch reads GSSSLNGQMDSPAPISPSLGP. An N-linked (GlcNAc...) asparagine glycan is attached at Asn891. Ser923 bears the Phosphoserine mark. Asn1027 carries an N-linked (GlcNAc...) asparagine glycan. The interval 1210 to 1229 is disordered; that stretch reads HRSSPPVSNGMLPPASKPGR. The Nuclear localization signal motif lies at 1262 to 1269; that stretch reads DVAFPKGK.

It belongs to the NRAMP (TC 2.A.55) family.

It localises to the endoplasmic reticulum membrane. It is found in the nucleus. The protein resides in the cytoplasm. Central factor in signaling pathways regulated by ethylene (ET) and involved in various processes including development, plant defense, senescence, nucleotide sugar flux, and tropisms. Its function is as follows. Trafficking signal inducing ethylene response. The nuclear localization is both necessary and sufficient to activate EIN3-mediated transcription and ethylene responses. The chain is Ethylene-insensitive protein 2.2 from Populus trichocarpa (Western balsam poplar).